A 77-amino-acid polypeptide reads, in one-letter code: Translation initiation factor IF-1, chloroplastic (77 aa).

In terms of domain architecture, S1-like spans 1 to 71 (MKEQKLIHEG…TRGRIIYRLR (71 aa)).

This sequence belongs to the IF-1 family. Component of the 30S ribosomal translation pre-initiation complex which assembles on the 30S ribosome in the order IF-2 and IF-3, IF-1 and N-formylmethionyl-tRNA(fMet); mRNA recruitment can occur at any time during PIC assembly.

The protein resides in the plastid. It localises to the chloroplast. In terms of biological role, one of the essential components for the initiation of protein synthesis. Stabilizes the binding of IF-2 and IF-3 on the 30S subunit to which N-formylmethionyl-tRNA(fMet) subsequently binds. Helps modulate mRNA selection, yielding the 30S pre-initiation complex (PIC). Upon addition of the 50S ribosomal subunit IF-1, IF-2 and IF-3 are released leaving the mature 70S translation initiation complex. This is Translation initiation factor IF-1, chloroplastic from Ceratophyllum demersum (Rigid hornwort).